The sequence spans 437 residues: Regulator of phospholipase D SRF1 (437 aa).

The interval 1–24 (MGDSNSSQEAYSDTTSTNASRIAD) is disordered. The Cytoplasmic segment spans residues 1 to 267 (MGDSNSSQEA…LTSLLLDNQY (267 aa)). 2 positions are modified to phosphoserine: serine 45 and serine 167. The chain crosses the membrane as a helical span at residues 268 to 288 (LILGLRIFTGILSCISLALAI). At 289 to 308 (KIFQNSRSNNTISESKIGQQ) the chain is on the extracellular side. N-linked (GlcNAc...) asparagine glycosylation occurs at asparagine 297. A helical membrane pass occupies residues 309–329 (PSTIMAICVNAVAIAYIIYIA). The Cytoplasmic portion of the chain corresponds to 330-348 (HDEFAGKPVGLRNPLSKLK). The helical transmembrane segment at 349 to 369 (LILLDLLFIIFSSANLALAFN) threads the bilayer. Topologically, residues 370-403 (TRFDKEWVCTSIRRSNGSTYGYPKIPRICRKQEA) are extracellular. The N-linked (GlcNAc...) asparagine glycan is linked to asparagine 385. The chain crosses the membrane as a helical span at residues 404 to 424 (LSAFLFVALFMWVITFSISIV). Residues 425–437 (RVVEKVSSITNRN) are Cytoplasmic-facing.

As to quaternary structure, interacts with SPO14.

The protein localises to the membrane. In terms of biological role, regulator of phospholipase D (SPO14) which is required for SPO14 catalytic activity in mitotic cells. Essential to buffer the toxic effects of C16:0 platelet activating factor. In Saccharomyces cerevisiae (strain ATCC 204508 / S288c) (Baker's yeast), this protein is Regulator of phospholipase D SRF1 (SRF1).